Reading from the N-terminus, the 205-residue chain is Probable thymidylate kinase (205 aa).

7–14 (GIDGAGKS) serves as a coordination point for ATP.

Belongs to the thymidylate kinase family.

It carries out the reaction dTMP + ATP = dTDP + ADP. In Thermococcus kodakarensis (strain ATCC BAA-918 / JCM 12380 / KOD1) (Pyrococcus kodakaraensis (strain KOD1)), this protein is Probable thymidylate kinase.